The following is a 456-amino-acid chain: Protein shifted (456 aa).

Positions 1–30 are cleaved as a signal peptide; that stretch reads MTHQGIGCLVKWLYLVLIVHTLLCIGQLEC. Positions 34 to 112 are disordered; it reads HHNRNNNNNN…GGGGSRHNRN (79 aa). Positions 44-55 are enriched in basic and acidic residues; that stretch reads RRADSSSSEEGH. Asn57 is a glycosylation site (N-linked (GlcNAc...) asparagine). Over residues 77–87 the composition is skewed to basic residues; sequence HQPRRGQRKKQ. Positions 88–107 are enriched in gly residues; that stretch reads QGGGGGGSGGGGGNGGGGGS. Positions 119–261 constitute a WIF domain; it reads LWINEQQLKM…PIRLNFKKEC (143 aa). 3 N-linked (GlcNAc...) asparagine glycosylation sites follow: Asn173, Asn217, and Asn227. 16 disulfides stabilise this stretch: Cys224–Cys261, Cys283–Cys293, Cys287–Cys299, Cys301–Cys310, Cys315–Cys325, Cys319–Cys331, Cys333–Cys342, Cys347–Cys357, Cys351–Cys363, Cys365–Cys374, Cys379–Cys389, Cys383–Cys395, Cys397–Cys406, Cys416–Cys423, Cys418–Cys429, and Cys431–Cys440. EGF-like domains lie at 279–311, 315–342, 343–375, 376–407, and 412–441; these read TLQECSLKCGKNGYCNEHHICKCNVGYTGQYCE, CFPQCLNGGNCTAPSVCTCPEGYQGTQC, EGGICKDKCLNGGKCIQKDKCQCSKGYYGLRCE, YSKCVIPCKNEGRCIGNNLCRCPNGLRGDHCE, and QRSICKCRNGTCVSHKHCKCHPGFYGRHCN. The N-linked (GlcNAc...) asparagine glycan is linked to Asn324. A glycan (N-linked (GlcNAc...) asparagine) is linked at Asn420.

As to quaternary structure, interacts with hh. In terms of tissue distribution, at the blastoderm stage, it is ubiquitously expressed. As embryogenesis continues, it is expressed in the epidermis and central nervous system, this expression being segmentally modulated. Also highly expressed at the foregut and hindgut throughout embryogenesis. In third instar wing imaginal disks, it is highly expressed in the most anterior and posterior parts of the disk and weakly expressed at the antero/posterior (A/P) compartment border. In the leg disks and the antenna part of the eye-antennal imaginal disk it is also weakly expressed at the A/P compartment border. Weakly expressed in the morphogenetic furrow in the eye primordium.

The protein resides in the secreted. The protein localises to the extracellular space. It localises to the extracellular matrix. Its function is as follows. Required for normal accumulation and movement of lipid-modified hedgehog (hh) morphogen. May act by stabilizing the interaction between heparan sulfate proteoglycans (HSPGs) and hh, HSPGs being required for diffusion of hh morphogen. Not involved in wingless (wg) morphogen movement, suggesting that it may provide HSPG specificity for Hh. This Drosophila melanogaster (Fruit fly) protein is Protein shifted (shf).